The chain runs to 422 residues: Serine hydroxymethyltransferase (422 aa).

(6S)-5,6,7,8-tetrahydrofolate is bound by residues L113 and G117–L119. K222 is subject to N6-(pyridoxal phosphate)lysine.

It belongs to the SHMT family. In terms of assembly, homodimer. It depends on pyridoxal 5'-phosphate as a cofactor.

The protein resides in the cytoplasm. It catalyses the reaction (6R)-5,10-methylene-5,6,7,8-tetrahydrofolate + glycine + H2O = (6S)-5,6,7,8-tetrahydrofolate + L-serine. The protein operates within one-carbon metabolism; tetrahydrofolate interconversion. Its pathway is amino-acid biosynthesis; glycine biosynthesis; glycine from L-serine: step 1/1. In terms of biological role, catalyzes the reversible interconversion of serine and glycine with tetrahydrofolate (THF) serving as the one-carbon carrier. This reaction serves as the major source of one-carbon groups required for the biosynthesis of purines, thymidylate, methionine, and other important biomolecules. Also exhibits THF-independent aldolase activity toward beta-hydroxyamino acids, producing glycine and aldehydes, via a retro-aldol mechanism. This is Serine hydroxymethyltransferase from Amoebophilus asiaticus (strain 5a2).